The sequence spans 309 residues: Probable manganese-dependent inorganic pyrophosphatase (309 aa).

Positions 9, 13, 15, 75, 97, and 149 each coordinate Mn(2+).

The protein belongs to the PPase class C family. Requires Mn(2+) as cofactor.

It localises to the cytoplasm. It carries out the reaction diphosphate + H2O = 2 phosphate + H(+). The polypeptide is Probable manganese-dependent inorganic pyrophosphatase (Bacillus anthracis (strain CDC 684 / NRRL 3495)).